The primary structure comprises 352 residues: Holliday junction branch migration complex subunit RuvB (352 aa).

Residues 1–181 (MTDRIVGAAK…FGIPVRLHFY (181 aa)) are large ATPase domain (RuvB-L). Residues L20, R21, G62, K65, T66, T67, 128–130 (EDF), R171, Y181, and R218 contribute to the ATP site. T66 lines the Mg(2+) pocket. The tract at residues 182-252 (EVAELEGIVR…AADKALQRLE (71 aa)) is small ATPAse domain (RuvB-S). Positions 255–352 (ELGLDALDHR…FDGDEENGSA (98 aa)) are head domain (RuvB-H). Positions 291, 310, and 315 each coordinate DNA.

The protein belongs to the RuvB family. As to quaternary structure, homohexamer. Forms an RuvA(8)-RuvB(12)-Holliday junction (HJ) complex. HJ DNA is sandwiched between 2 RuvA tetramers; dsDNA enters through RuvA and exits via RuvB. An RuvB hexamer assembles on each DNA strand where it exits the tetramer. Each RuvB hexamer is contacted by two RuvA subunits (via domain III) on 2 adjacent RuvB subunits; this complex drives branch migration. In the full resolvosome a probable DNA-RuvA(4)-RuvB(12)-RuvC(2) complex forms which resolves the HJ.

Its subcellular location is the cytoplasm. It carries out the reaction ATP + H2O = ADP + phosphate + H(+). In terms of biological role, the RuvA-RuvB-RuvC complex processes Holliday junction (HJ) DNA during genetic recombination and DNA repair, while the RuvA-RuvB complex plays an important role in the rescue of blocked DNA replication forks via replication fork reversal (RFR). RuvA specifically binds to HJ cruciform DNA, conferring on it an open structure. The RuvB hexamer acts as an ATP-dependent pump, pulling dsDNA into and through the RuvAB complex. RuvB forms 2 homohexamers on either side of HJ DNA bound by 1 or 2 RuvA tetramers; 4 subunits per hexamer contact DNA at a time. Coordinated motions by a converter formed by DNA-disengaged RuvB subunits stimulates ATP hydrolysis and nucleotide exchange. Immobilization of the converter enables RuvB to convert the ATP-contained energy into a lever motion, pulling 2 nucleotides of DNA out of the RuvA tetramer per ATP hydrolyzed, thus driving DNA branch migration. The RuvB motors rotate together with the DNA substrate, which together with the progressing nucleotide cycle form the mechanistic basis for DNA recombination by continuous HJ branch migration. Branch migration allows RuvC to scan DNA until it finds its consensus sequence, where it cleaves and resolves cruciform DNA. This chain is Holliday junction branch migration complex subunit RuvB, found in Parvibaculum lavamentivorans (strain DS-1 / DSM 13023 / NCIMB 13966).